We begin with the raw amino-acid sequence, 181 residues long: Lectin beta-1 and beta-2 chains (181 aa).

Mn(2+) is bound by residues glutamate 119 and aspartate 121. Residues aspartate 121, phenylalanine 123, asparagine 125, and aspartate 129 each contribute to the Ca(2+) site. Residues aspartate 129 and histidine 136 each coordinate Mn(2+).

Belongs to the leguminous lectin family. In terms of assembly, tetramer of two alpha and two beta chains.

The protein is Lectin beta-1 and beta-2 chains of Lathyrus ochrus (Cyprus-vetch).